The chain runs to 469 residues: Glutamate--tRNA ligase (469 aa).

The 'HIGH' region motif lies at Pro11–Asn21. Positions Gly118–Pro131 are enriched in basic and acidic residues. The interval Gly118–Pro139 is disordered. Residues Lys243 to Arg247 carry the 'KMSKS' region motif. Lys246 contributes to the ATP binding site.

It belongs to the class-I aminoacyl-tRNA synthetase family. Glutamate--tRNA ligase type 1 subfamily. In terms of assembly, monomer.

The protein localises to the cytoplasm. The enzyme catalyses tRNA(Glu) + L-glutamate + ATP = L-glutamyl-tRNA(Glu) + AMP + diphosphate. Its function is as follows. Catalyzes the attachment of glutamate to tRNA(Glu) in a two-step reaction: glutamate is first activated by ATP to form Glu-AMP and then transferred to the acceptor end of tRNA(Glu). The sequence is that of Glutamate--tRNA ligase from Burkholderia pseudomallei (strain 668).